Consider the following 179-residue polypeptide: UPF0134 protein MPN_145 (179 aa).

This sequence belongs to the UPF0134 family.

The polypeptide is UPF0134 protein MPN_145 (Mycoplasma pneumoniae (strain ATCC 29342 / M129 / Subtype 1) (Mycoplasmoides pneumoniae)).